A 150-amino-acid polypeptide reads, in one-letter code: Ventricular natriuretic peptide (150 aa).

A signal peptide spans 1 to 21; that stretch reads MAKSGIYLGCFILILIQNMVA. Positions 52–75 are disordered; that stretch reads EEPEVYPESEDMKMDAEEEDAGIS. Residues Cys-120 and Cys-136 are joined by a disulfide bond.

Belongs to the natriuretic peptide family. Heart ventricle, and to a lower extent in heart atrium.

It localises to the secreted. Functionally, exhibits natriuretic and vasodepressor activity. The chain is Ventricular natriuretic peptide (vnp) from Anguilla japonica (Japanese eel).